Here is a 718-residue protein sequence, read N- to C-terminus: Probable glycerol-3-phosphate acyltransferase, mitochondrial (718 aa).

Positions 167 to 172 (HRSHLD) match the HXXXXD motif motif. Residues 409-425 (MMCSISPVAVVSCLLLA) traverse the membrane as a helical segment.

The protein belongs to the GPAT/DAPAT family.

Its subcellular location is the mitochondrion membrane. The catalysed reaction is sn-glycerol 3-phosphate + an acyl-CoA = a 1-acyl-sn-glycero-3-phosphate + CoA. It participates in phospholipid metabolism; CDP-diacylglycerol biosynthesis; CDP-diacylglycerol from sn-glycerol 3-phosphate: step 1/3. This Caenorhabditis elegans protein is Probable glycerol-3-phosphate acyltransferase, mitochondrial (acl-6).